A 1938-amino-acid polypeptide reads, in one-letter code: Myosin-1 (1938 aa).

The region spanning 33-82 is the Myosin N-terminal SH3-like domain; it reads DAKTSVFVADPKESFVKATVQSREGGKVTAKTEAGATVTVKEDQCFPMNP. Residues Thr-64 and Thr-69 each carry the phosphothreonine modification. Residues 86 to 781 form the Myosin motor domain; sequence DKIEDMAMMT…LLGLLEEMRD (696 aa). An N6,N6,N6-trimethyllysine modification is found at Lys-130. ATP is bound at residue 179-186; the sequence is GESGAGKT. Position 389 is a phosphotyrosine (Tyr-389). Phosphothreonine is present on Thr-419. A Phosphotyrosine modification is found at Tyr-424. The residue at position 625 (Ser-625) is a Phosphoserine. An actin-binding region spans residues 658 to 680; sequence LNKLMTNLRSTHPHFVRCIIPNE. His-756 is subject to Pros-methylhistidine. Residues 760 to 774 are actin-binding; that stretch reads KFGHTKVFFKAGLLG. Positions 784–813 constitute an IQ domain; the sequence is LAQIITRTQARCRGFLARVEYQRMVERRES. Residues 842-1938 are a coiled coil; it reads LLKSAETEKE…EVHTKIISEE (1097 aa). Phosphoserine occurs at positions 1091 and 1095. 2 disordered regions span residues 1124–1146 and 1152–1171; these read EIEA…SREL and RLEE…KKRE. Basic and acidic residues predominate over residues 1127–1146; that stretch reads AERASRAKAEKQRSDLSREL. A phosphoserine mark is found at Ser-1161 and Ser-1236. Phosphothreonine is present on Thr-1240. Ser-1242 carries the post-translational modification Phosphoserine. Thr-1254 carries the post-translational modification Phosphothreonine. At Ser-1260 the chain carries Phosphoserine. Phosphothreonine is present on Thr-1285. Phosphoserine is present on residues Ser-1291, Ser-1302, and Ser-1305. Position 1463 is a phosphotyrosine (Tyr-1463). Thr-1466 is modified (phosphothreonine). Residue Ser-1473 is modified to Phosphoserine. At Tyr-1491 the chain carries Phosphotyrosine. At Ser-1494 the chain carries Phosphoserine. At Thr-1500 the chain carries Phosphothreonine. Position 1513 is a phosphoserine (Ser-1513). A Phosphothreonine modification is found at Thr-1516. Phosphoserine is present on residues Ser-1541, Ser-1553, Ser-1573, Ser-1713, and Ser-1725. Residues Thr-1729 and Thr-1735 each carry the phosphothreonine modification. The residue at position 1738 (Ser-1738) is a Phosphoserine.

This sequence belongs to the TRAFAC class myosin-kinesin ATPase superfamily. Myosin family. In terms of assembly, muscle myosin is a hexameric protein that consists of 2 heavy chain subunits (MHC), 2 alkali light chain subunits (MLC) and 2 regulatory light chain subunits (MLC-2). Interacts with SLC26A5.

Its subcellular location is the cytoplasm. It localises to the myofibril. Functionally, required for normal hearing. It plays a role in cochlear amplification of auditory stimuli, likely through the positive regulation of prestin (SLC26A5) activity and outer hair cell (OHC) electromotility. In Equus caballus (Horse), this protein is Myosin-1 (MYH1).